Reading from the N-terminus, the 1368-residue chain is DNA-directed RNA polymerase subunit beta' (1368 aa).

The interval 1-38 (MTSSSKPARKTSKSKSKASKAAEAPAAPSNELSREAPT) is disordered. Over residues 7-18 (PARKTSKSKSKA) the composition is skewed to basic residues. The segment covering 19-29 (SKAAEAPAAPS) has biased composition (low complexity). 4 residues coordinate Zn(2+): cysteine 250, cysteine 318, cysteine 325, and cysteine 328. Residues 1340 to 1368 (AGEELAEEHVPDPGALEGLQEEGLLSQDS) are disordered. The segment covering 1353–1368 (GALEGLQEEGLLSQDS) has biased composition (low complexity).

The protein belongs to the RNA polymerase beta' chain family. RpoC2 subfamily. In terms of assembly, in cyanobacteria the RNAP catalytic core is composed of 2 alpha, 1 beta, 1 beta', 1 gamma and 1 omega subunit. When a sigma factor is associated with the core the holoenzyme is formed, which can initiate transcription. Requires Zn(2+) as cofactor.

The catalysed reaction is RNA(n) + a ribonucleoside 5'-triphosphate = RNA(n+1) + diphosphate. DNA-dependent RNA polymerase catalyzes the transcription of DNA into RNA using the four ribonucleoside triphosphates as substrates. The sequence is that of DNA-directed RNA polymerase subunit beta' from Synechococcus sp. (strain RCC307).